Here is a 120-residue protein sequence, read N- to C-terminus: Small ribosomal subunit protein uS13 (120 aa).

Positions 96–120 are disordered; sequence PCRGQRTRTNARTRKGPRKAIAGKK.

This sequence belongs to the universal ribosomal protein uS13 family. As to quaternary structure, part of the 30S ribosomal subunit. Forms a loose heterodimer with protein S19. Forms two bridges to the 50S subunit in the 70S ribosome.

In terms of biological role, located at the top of the head of the 30S subunit, it contacts several helices of the 16S rRNA. In the 70S ribosome it contacts the 23S rRNA (bridge B1a) and protein L5 of the 50S subunit (bridge B1b), connecting the 2 subunits; these bridges are implicated in subunit movement. Contacts the tRNAs in the A and P-sites. The chain is Small ribosomal subunit protein uS13 from Neisseria gonorrhoeae (strain ATCC 700825 / FA 1090).